We begin with the raw amino-acid sequence, 251 residues long: Small ribosomal subunit protein uS2 (251 aa).

The residue at position 2 (Ser-2) is an N-acetylserine. The interval 213 to 251 is disordered; it reads QVAEEATAAADEDVKEEVAEEQTEAADWAEGNTEEVASW. A compositionally biased stretch (acidic residues) spans 222–236; it reads ADEDVKEEVAEEQTE.

The protein belongs to the universal ribosomal protein uS2 family. As to quaternary structure, component of the small ribosomal subunit. Mature ribosomes consist of a small (40S) and a large (60S) subunit. The 40S subunit contains about 33 different proteins and 1 molecule of RNA (18S). The 60S subunit contains about 49 different proteins and 3 molecules of RNA (25S, 5.8S and 5S). Interacts with RPS21.

Its subcellular location is the cytoplasm. In terms of biological role, required for the assembly and/or stability of the 40S ribosomal subunit. Required for the processing of the 20S rRNA-precursor to mature 18S rRNA in a late step of the maturation of 40S ribosomal subunits. This chain is Small ribosomal subunit protein uS2, found in Lachancea thermotolerans (strain ATCC 56472 / CBS 6340 / NRRL Y-8284) (Yeast).